A 235-amino-acid chain; its full sequence is Ribonuclease 3 (235 aa).

An RNase III domain is found at Ile6–Gly131. Glu44 serves as a coordination point for Mg(2+). The active site involves Asp48. The Mg(2+) site is built by Asp117 and Glu120. Residue Glu120 is part of the active site. The DRBM domain maps to Asp156–Met225.

This sequence belongs to the ribonuclease III family. As to quaternary structure, homodimer. Mg(2+) serves as cofactor.

The protein resides in the cytoplasm. It catalyses the reaction Endonucleolytic cleavage to 5'-phosphomonoester.. Digests double-stranded RNA. Involved in the processing of primary rRNA transcript to yield the immediate precursors to the large and small rRNAs (23S and 16S). Processes some mRNAs, and tRNAs when they are encoded in the rRNA operon. Processes pre-crRNA and tracrRNA of type II CRISPR loci if present in the organism. The polypeptide is Ribonuclease 3 (Bartonella bacilliformis (strain ATCC 35685 / KC583 / Herrer 020/F12,63)).